The chain runs to 176 residues: Large ribosomal subunit protein uL6 (176 aa).

Belongs to the universal ribosomal protein uL6 family. Part of the 50S ribosomal subunit.

Its function is as follows. This protein binds to the 23S rRNA, and is important in its secondary structure. It is located near the subunit interface in the base of the L7/L12 stalk, and near the tRNA binding site of the peptidyltransferase center. This chain is Large ribosomal subunit protein uL6, found in Burkholderia ambifaria (strain ATCC BAA-244 / DSM 16087 / CCUG 44356 / LMG 19182 / AMMD) (Burkholderia cepacia (strain AMMD)).